Reading from the N-terminus, the 196-residue chain is Cysteine/O-acetylserine efflux protein (196 aa).

A helical membrane pass occupies residues 1-21 (MTPTLISAFLTYTLITALTPG). The Cytoplasmic segment spans residues 22-41 (PNNILALSSVTSHGLRRSLR). Residues 42 to 62 (VLAGMSVGFIITMLICAALTF) traverse the membrane as a helical segment. Residues 63 to 70 (SLVELDSR) are Periplasmic-facing. The chain crosses the membrane as a helical span at residues 71–91 (FTLVLGWIGAAYILWLAWQIA). Topologically, residues 92 to 114 (KSKPATGTPSVEPVGFWASLGLQ) are cytoplasmic. A helical membrane pass occupies residues 115 to 135 (FVNVKIILYGITALSTFVLPV). Residues 136 to 139 (TREP) are Periplasmic-facing. Residues 140–160 (VWLISVSLLLAAIGALGNLCW) form a helical membrane-spanning segment. Residues 161-170 (ALAGHLFQRL) lie on the Cytoplasmic side of the membrane. A helical membrane pass occupies residues 171–191 (FLLYGRQLNWMLAALLVYCAV). Residues 192–196 (RIVVE) lie on the Periplasmic side of the membrane.

Belongs to the Rht family.

The protein localises to the cell inner membrane. It carries out the reaction O-acetyl-L-serine(in) = O-acetyl-L-serine(out). The catalysed reaction is L-cysteine(in) = L-cysteine(out). In terms of biological role, exporter of O-acetylserine (OAS) and cysteine. This is Cysteine/O-acetylserine efflux protein (eamB) from Klebsiella pneumoniae subsp. pneumoniae (strain ATCC 700721 / MGH 78578).